We begin with the raw amino-acid sequence, 431 residues long: Beta-lactamase hydrolase-like protein (431 aa).

Residues histidine 212, histidine 214, and histidine 286 each coordinate Zn(2+). Aspartate 309 contributes to the substrate binding site.

Belongs to the metallo-beta-lactamase superfamily. Zn(2+) is required as a cofactor.

In terms of biological role, could play a role in cell adherence or biofilm development. The sequence is that of Beta-lactamase hydrolase-like protein from Xylella fastidiosa (strain 9a5c).